The sequence spans 196 residues: Cell division protein SepF (196 aa).

Residues E16–P81 are disordered. Residues R56–A69 show a composition bias toward polar residues.

This sequence belongs to the SepF family. In terms of assembly, homodimer. Interacts with FtsZ.

It localises to the cytoplasm. Its function is as follows. Cell division protein that is part of the divisome complex and is recruited early to the Z-ring. Probably stimulates Z-ring formation, perhaps through the cross-linking of FtsZ protofilaments. Its function overlaps with FtsA. In Lactococcus lactis subsp. lactis (strain IL1403) (Streptococcus lactis), this protein is Cell division protein SepF.